The chain runs to 76 residues: MPREIKEIKDFLVTARRKDAKSVKIKKNAENVKFKVRCSRFLYTLVITDKEKAEKLKQSLPPGLQVKEVKKTNEKL.

It belongs to the eukaryotic ribosomal protein eL38 family.

The polypeptide is Large ribosomal subunit protein eL38 (RpL38) (Lysiphlebus testaceipes (Greenbugs aphid parastoid)).